Here is a 466-residue protein sequence, read N- to C-terminus: MNAETTDGKRVSIIGAKRSGIAAALLLQQRGATVYVSDREPVGDAERAFLEHHGIAFEEEGHTDRILEADFSVVSPGIPPHASVIRRLEHEAIPLFSEIEAASWFCPAFIIGITGTDGKTTTSSMVEAICLSGANSREQRVFSAGNIGVPFSSLVGEMRKGDIAVVELSSYQLERCRSFRPDVAVITNIMPDHLDRYGGSMKRYAEAKYRIYAQQRKQDTLVYNADDETLRAHFEGGGAFVPQLVPFSLDRKRASLGGACYAAIEGDWLITVVNGREEKVITGSGLFKRSFRGRHNLENALAAVAATRAAGVDVFPIREALRRFAGVEHRQEYVRTMHGVDWINDSKATNLNALRQALDATPGKLVLIAGGRDKGDDLSDLEERVRQKVSVLVVFGESKAKFTEAFSSVVRVVPALSLEEAVEQAQRYASTGETVLFSPGCSSFDMFESFEERGMRFKKHVEGMQS.

115 to 121 serves as a coordination point for ATP; the sequence is GTDGKTT.

The protein belongs to the MurCDEF family.

Its subcellular location is the cytoplasm. The enzyme catalyses UDP-N-acetyl-alpha-D-muramoyl-L-alanine + D-glutamate + ATP = UDP-N-acetyl-alpha-D-muramoyl-L-alanyl-D-glutamate + ADP + phosphate + H(+). Its pathway is cell wall biogenesis; peptidoglycan biosynthesis. In terms of biological role, cell wall formation. Catalyzes the addition of glutamate to the nucleotide precursor UDP-N-acetylmuramoyl-L-alanine (UMA). The chain is UDP-N-acetylmuramoylalanine--D-glutamate ligase from Chlorobium phaeobacteroides (strain BS1).